The chain runs to 308 residues: Pseudouridine-5'-phosphate glycosidase (308 aa).

Residue E26 is the Proton donor of the active site. Residues K87 and V107 each contribute to the substrate site. Position 139 (D139) interacts with Mn(2+). Residue 141–143 participates in substrate binding; that stretch reads SAD. K160 acts as the Nucleophile in catalysis.

This sequence belongs to the pseudouridine-5'-phosphate glycosidase family. Homotrimer. Mn(2+) is required as a cofactor.

It carries out the reaction D-ribose 5-phosphate + uracil = psi-UMP + H2O. In terms of biological role, catalyzes the reversible cleavage of pseudouridine 5'-phosphate (PsiMP) to ribose 5-phosphate and uracil. Functions biologically in the cleavage direction, as part of a pseudouridine degradation pathway. This chain is Pseudouridine-5'-phosphate glycosidase, found in Legionella pneumophila subsp. pneumophila (strain Philadelphia 1 / ATCC 33152 / DSM 7513).